Here is a 151-residue protein sequence, read N- to C-terminus: 4-hydroxybenzoyl-CoA thioesterase (151 aa).

Glu-73 is a catalytic residue. 100–102 (FFR) provides a ligand contact to substrate.

The protein belongs to the thioesterase PaaI family. As to quaternary structure, homotetramer.

It carries out the reaction 4-hydroxybenzoyl-CoA + H2O = 4-hydroxybenzoate + CoA + H(+). Its pathway is xenobiotic degradation; 4-chlorobenzoate degradation; 4-hydroxybenzoate from 4-chlorobenzoate: step 3/3. The chain is 4-hydroxybenzoyl-CoA thioesterase from Arthrobacter globiformis.